We begin with the raw amino-acid sequence, 464 residues long: Type I restriction enzyme EcoKI specificity subunit (464 aa).

It belongs to the type-I restriction system S methylase family. In terms of assembly, the type I restriction/modification system is composed of three polypeptides R, M and S. The restriction enzyme has stoichiometry R(2)M(2)S(1). The methyltransferase is composed of M(2)S(1). As to quaternary structure, (Microbial infection) Interacts with Escherichia phage T7 protein Ocr; this interaction leads to the inhibition of the methyltransferase restriction enzyme M.EcoKI composed of M(2)S(1).

Functionally, the specificity (S) subunit of a type I restriction enzyme; this subunit dictates DNA sequence specificity. The M and S subunits together form a methyltransferase (MTase) that methylates A-2 on the top and A-3 on the bottom strand of the sequence 5'-AACN(6)GTGC-3'. In the presence of the R subunit the complex can also act as an endonuclease, binding to the same target sequence but cutting the DNA some distance from this site. Whether the DNA is cut or modified depends on the methylation state of the target sequence. When the target site is unmodified, the DNA is cut. When the target site is hemimethylated, the complex acts as a maintenance MTase modifying the DNA so that both strands become methylated. After locating a non-methylated recognition site, the enzyme complex serves as a molecular motor that translocates DNA in an ATP-dependent manner until a collision occurs that triggers cleavage. In Escherichia coli (strain K12), this protein is Type I restriction enzyme EcoKI specificity subunit.